A 407-amino-acid chain; its full sequence is Probable tRNA sulfurtransferase (407 aa).

The THUMP domain maps to 61–165 (NEITYRLSKI…LDAIYMYEEV (105 aa)). ATP contacts are provided by residues 183-184 (ML), 208-209 (HF), arginine 265, glycine 287, and glutamine 296.

It belongs to the ThiI family.

The protein resides in the cytoplasm. It catalyses the reaction [ThiI sulfur-carrier protein]-S-sulfanyl-L-cysteine + a uridine in tRNA + 2 reduced [2Fe-2S]-[ferredoxin] + ATP + H(+) = [ThiI sulfur-carrier protein]-L-cysteine + a 4-thiouridine in tRNA + 2 oxidized [2Fe-2S]-[ferredoxin] + AMP + diphosphate. It carries out the reaction [ThiS sulfur-carrier protein]-C-terminal Gly-Gly-AMP + S-sulfanyl-L-cysteinyl-[cysteine desulfurase] + AH2 = [ThiS sulfur-carrier protein]-C-terminal-Gly-aminoethanethioate + L-cysteinyl-[cysteine desulfurase] + A + AMP + 2 H(+). It participates in cofactor biosynthesis; thiamine diphosphate biosynthesis. In terms of biological role, catalyzes the ATP-dependent transfer of a sulfur to tRNA to produce 4-thiouridine in position 8 of tRNAs, which functions as a near-UV photosensor. Also catalyzes the transfer of sulfur to the sulfur carrier protein ThiS, forming ThiS-thiocarboxylate. This is a step in the synthesis of thiazole, in the thiamine biosynthesis pathway. The sulfur is donated as persulfide by IscS. This chain is Probable tRNA sulfurtransferase, found in Staphylococcus aureus (strain bovine RF122 / ET3-1).